A 429-amino-acid chain; its full sequence is Probable E3 ubiquitin-protein ligase makorin-1 (429 aa).

C3H1-type zinc fingers lie at residues Trp-18–Thr-45, Lys-48–Pro-75, and Glu-153–Val-180. Residues Cys-181–His-208 are makorin-type Cys-His. An RING-type zinc finger spans residues Cys-226 to Arg-280. Residues Gly-309–Pro-338 form a C3H1-type 4 zinc finger. The segment at Glu-343–Arg-362 is disordered. Positions Gln-348 to Asn-358 are enriched in low complexity.

It carries out the reaction S-ubiquitinyl-[E2 ubiquitin-conjugating enzyme]-L-cysteine + [acceptor protein]-L-lysine = [E2 ubiquitin-conjugating enzyme]-L-cysteine + N(6)-ubiquitinyl-[acceptor protein]-L-lysine.. The protein operates within protein modification; protein ubiquitination. E3 ubiquitin ligase catalyzing the covalent attachment of ubiquitin moieties onto substrate proteins. The chain is Probable E3 ubiquitin-protein ligase makorin-1 from Takifugu rubripes (Japanese pufferfish).